The chain runs to 430 residues: Histidinol dehydrogenase (430 aa).

3 residues coordinate NAD(+): Tyr-130, Gln-191, and Asn-214. Substrate-binding residues include Ser-237, Gln-259, and His-262. 2 residues coordinate Zn(2+): Gln-259 and His-262. Catalysis depends on proton acceptor residues Glu-327 and His-328. Substrate-binding residues include His-328, Asp-361, Glu-415, and His-420. Asp-361 is a binding site for Zn(2+). Position 420 (His-420) interacts with Zn(2+).

This sequence belongs to the histidinol dehydrogenase family. Zn(2+) serves as cofactor.

It catalyses the reaction L-histidinol + 2 NAD(+) + H2O = L-histidine + 2 NADH + 3 H(+). It functions in the pathway amino-acid biosynthesis; L-histidine biosynthesis; L-histidine from 5-phospho-alpha-D-ribose 1-diphosphate: step 9/9. Its function is as follows. Catalyzes the sequential NAD-dependent oxidations of L-histidinol to L-histidinaldehyde and then to L-histidine. In Brucella melitensis biotype 1 (strain ATCC 23456 / CCUG 17765 / NCTC 10094 / 16M), this protein is Histidinol dehydrogenase.